A 475-amino-acid polypeptide reads, in one-letter code: Aspartyl/glutamyl-tRNA(Asn/Gln) amidotransferase subunit B (475 aa).

Belongs to the GatB/GatE family. GatB subfamily. As to quaternary structure, heterotrimer of A, B and C subunits.

It carries out the reaction L-glutamyl-tRNA(Gln) + L-glutamine + ATP + H2O = L-glutaminyl-tRNA(Gln) + L-glutamate + ADP + phosphate + H(+). The catalysed reaction is L-aspartyl-tRNA(Asn) + L-glutamine + ATP + H2O = L-asparaginyl-tRNA(Asn) + L-glutamate + ADP + phosphate + 2 H(+). In terms of biological role, allows the formation of correctly charged Asn-tRNA(Asn) or Gln-tRNA(Gln) through the transamidation of misacylated Asp-tRNA(Asn) or Glu-tRNA(Gln) in organisms which lack either or both of asparaginyl-tRNA or glutaminyl-tRNA synthetases. The reaction takes place in the presence of glutamine and ATP through an activated phospho-Asp-tRNA(Asn) or phospho-Glu-tRNA(Gln). This is Aspartyl/glutamyl-tRNA(Asn/Gln) amidotransferase subunit B from Chlorobium phaeobacteroides (strain DSM 266 / SMG 266 / 2430).